Consider the following 563-residue polypeptide: Autotransporter BimA (563 aa).

The segment at 1–20 (MKYRRLSLAHARQDSGQAAS) is disordered. Positions 1-48 (MKYRRLSLAHARQDSGQAASNARSRRFARLLCSSIAPLALGFSADAFA) are cleaved as a signal peptide. The interval 61-472 (APNDAHGNLL…NLAISNSNAY (412 aa)) is surface exposed passenger domain. The region spanning 65 to 82 (AHGNLLDEIRRGVPLRHV) is the WH2 domain. Positions 96-130 (TLADAMRRVIDSRRTAFDSPPATPASPSPSWSDDE) are central and acidic domains. The tract at residues 109 to 350 (RTAFDSPPAT…PARPGGGQFT (242 aa)) is disordered. 3 stretches are compositionally biased toward low complexity: residues 138 to 150 (ATRP…SAAR), 162 to 197 (PASA…STPR), and 211 to 227 (SPAA…AHSR). Composition is skewed to polar residues over residues 228 to 238 (GSTQPPSNLST) and 269 to 281 (SRGS…NLST). Residues 473–509 (TNQRIGDLQQSITETARDAYSGVAAATALTMIPDVDR) are outer membrane translocation of the passenger domain. A run of 4 beta stranded transmembrane segments spans residues 510 to 519 (DKMLSIGVGG), 525 to 536 (HRAVALGGTARI), 543 to 549 (RAGVAMS), and 553 to 563 (NTVGVGMSWQW). Positions 510–563 (DKMLSIGVGGAVYKGHRAVALGGTARIGENLKVRAGVAMSAGGNTVGVGMSWQW) are translocator domain.

The protein belongs to the autotransporter-2 (AT-2) (TC 1.B.40) family. Homotrimer. Interacts with host G-actin; the interaction is direct. Interacts (via central and acidic domains) with host ACTR2/ARP2 and ACTR3/ARP3.

It is found in the cell outer membrane. The protein localises to the cell surface. In terms of biological role, during host cell infection, required for actin-based intracellular motility. Mediates actin tail formation at one pole of the bacteria surface by recruiting host Arp2/3 (ACTR3/ARP3-ACTR2/ARP2) which leads to actin polymerization which provides the propulsive force for intracellular movement and intercellular dissemination of the bacterium. This chain is Autotransporter BimA, found in Burkholderia thailandensis (strain ATCC 700388 / DSM 13276 / CCUG 48851 / CIP 106301 / E264).